We begin with the raw amino-acid sequence, 118 residues long: Large ribosomal subunit protein bL20 (118 aa).

The protein belongs to the bacterial ribosomal protein bL20 family.

In terms of biological role, binds directly to 23S ribosomal RNA and is necessary for the in vitro assembly process of the 50S ribosomal subunit. It is not involved in the protein synthesizing functions of that subunit. The chain is Large ribosomal subunit protein bL20 from Bacillus mycoides (strain KBAB4) (Bacillus weihenstephanensis).